We begin with the raw amino-acid sequence, 242 residues long: Probable 2-phosphosulfolactate phosphatase (242 aa).

It belongs to the ComB family. It depends on Mg(2+) as a cofactor.

The enzyme catalyses (2R)-O-phospho-3-sulfolactate + H2O = (2R)-3-sulfolactate + phosphate. The sequence is that of Probable 2-phosphosulfolactate phosphatase from Prochlorococcus marinus (strain NATL1A).